Consider the following 363-residue polypeptide: Jasmonate-induced oxygenase 3 (363 aa).

One can recognise a Fe2OG dioxygenase domain in the interval 210–312 (ESGGCLRVNY…RLSLAFFYNP (103 aa)). Arginine 216 provides a ligand contact to jasmonate. Residues asparagine 218 and tyrosine 220 each coordinate 2-oxoglutarate. Fe cation contacts are provided by histidine 235, aspartate 237, and histidine 293. 2 residues coordinate 2-oxoglutarate: arginine 303 and serine 305. Jasmonate contacts are provided by arginine 342 and arginine 346.

Belongs to the iron/ascorbate-dependent oxidoreductase family. It depends on L-ascorbate as a cofactor. The cofactor is Fe(2+).

It catalyses the reaction jasmonate + 2-oxoglutarate + O2 = (1R,2R)-12-hydroxyjasmonate + succinate + CO2. 2-oxoglutarate-dependent dioxygenase involved in the oxidation of jasmonate (JA), a stress-induced phytohormone synthesized in response to attack by pathogens and herbivores, which triggers the activation of defense responses via the JA-mediated signaling pathway. Converts JA to 12-hydroxyjasmonate (12OH-JA), an inactive form of JA. Is specific to free JA, and cannot oxidize the bioactive form jasmonoyl-L-isoleucine (JA-Ile) or other JA-amino acid conjugates. Prevents over-accumulation of JA and indirectly its bioactive form JA-Ile under stress response. Acts as a negative regulator of JA-mediated defense signaling, by contributing to 12OH-JA accumulation, which represses JA defense responses upon infection by the fungal pathogen Botrytis cinerea. Acts as a negative regulator of JA-mediated defense responses upon infestation by the herbivorous caterpillar Mamestra brassicae. The protein is Jasmonate-induced oxygenase 3 of Arabidopsis thaliana (Mouse-ear cress).